Consider the following 521-residue polypeptide: Melanopsin (521 aa).

The Extracellular portion of the chain corresponds to 1 to 71 (MDSPSGPRVL…VDVPDHAHYT (71 aa)). 2 N-linked (GlcNAc...) asparagine glycosylation sites follow: asparagine 30 and asparagine 34. The helical transmembrane segment at 72–92 (LGTVILLVGLTGMLGNLTVIY) threads the bilayer. Residues 93–106 (TFCRNRGLRTPANM) lie on the Cytoplasmic side of the membrane. The helical transmembrane segment at 107 to 127 (FIINLAVSDFLMSVTQAPVFF) threads the bilayer. The Extracellular portion of the chain corresponds to 128 to 143 (ASSLYKKWLFGETGCE). Cysteine 142 and cysteine 220 are joined by a disulfide. The chain crosses the membrane as a helical span at residues 144–164 (FYAFCGAVFGITSMITLTAIA). The Cytoplasmic portion of the chain corresponds to 165-187 (MDRYLVITRPLATIGRGSKRRTA). A helical transmembrane segment spans residues 188–208 (LVLLGVWLYALAWSLPPFFGW). At 209–237 (SAYVPEGLLTSCSWDYMTFTPQVRAYTML) the chain is on the extracellular side. Residues 238 to 258 (LFCFVFFLPLLIIIFCYIFIF) traverse the membrane as a helical segment. Residues 259–293 (RAIRETGRACEGCGESPLRQRRQWQRLQSEWKMAK) are Cytoplasmic-facing. Residues 294–314 (VALIVILLFVLSWAPYSTVAL) form a helical membrane-spanning segment. Over 315-329 (VAFAGYSHILTPYMS) the chain is Extracellular. Residues 330–350 (SVPAVIAKASAIHNPIIYAIT) form a helical membrane-spanning segment. Lysine 337 is modified (N6-(retinylidene)lysine). The Cytoplasmic portion of the chain corresponds to 351–521 (HPKYRVAIAQ…LEDDVTLRHL (171 aa)). The disordered stretch occupies residues 445-486 (GELKASSSPQVQRSKTPKVPGPSTCRPMKGQGARPSSLRGDQ). The span at 449–458 (ASSSPQVQRS) shows a compositional bias: polar residues.

The protein belongs to the G-protein coupled receptor 1 family. Opsin subfamily. As to expression, expressed in the retinal pigment epithelium and ganglion cell layer (at protein level). Also expressed in amacrine cell layers of the retina. Weakly expressed in vibrissae, and tail. In terms of tissue distribution, observed with processes in the outer strata of inner plexiform layer (IPL) close to the inner nuclear layer (INL) or is found to be bistratified with processes located both in the inner (ON) or outer (OFF) layers of the IPL (at protein level). A second population of isoform 1 is identified in processes which are confined to the inner layer of the IPL near to the ganglion cell layer (GCL) (at protein level). About 40 times more abundant than isoform 1 in the retina (at protein level). Isoform 2 is involved in processes localized to the outer IPL or is bistratified with processes in both the inner and outer layers of the IPL (at protein level). Isoform 2 is absent in the processes confined only to the inner layer of the IPL (at protein level).

Its subcellular location is the cell membrane. The protein localises to the cell projection. It localises to the axon. It is found in the dendrite. The protein resides in the perikaryon. Photoreceptor that binds cis-retinaldehydes. Contributes to pupillar reflex, photoentrainment and other non-image forming responses to light. May be involved in the optokinetic visual tracking response. May be involved in the regulation of retinal hyaloid vessel growth and regression. The sequence is that of Melanopsin (Opn4) from Mus musculus (Mouse).